The chain runs to 604 residues: Elongation factor 4 (604 aa).

Positions 7–189 (KNIRNFCIIA…QIVTKIPAPS (183 aa)) constitute a tr-type G domain. GTP is bound by residues 19–24 (DHGKST) and 136–139 (NKID).

It belongs to the TRAFAC class translation factor GTPase superfamily. Classic translation factor GTPase family. LepA subfamily.

It localises to the cell membrane. It catalyses the reaction GTP + H2O = GDP + phosphate + H(+). In terms of biological role, required for accurate and efficient protein synthesis under certain stress conditions. May act as a fidelity factor of the translation reaction, by catalyzing a one-codon backward translocation of tRNAs on improperly translocated ribosomes. Back-translocation proceeds from a post-translocation (POST) complex to a pre-translocation (PRE) complex, thus giving elongation factor G a second chance to translocate the tRNAs correctly. Binds to ribosomes in a GTP-dependent manner. In Lachnospira eligens (strain ATCC 27750 / DSM 3376 / VPI C15-48 / C15-B4) (Eubacterium eligens), this protein is Elongation factor 4.